A 70-amino-acid polypeptide reads, in one-letter code: UPF0519 protein B (70 aa).

Belongs to the UPF0519 family.

The sequence is that of UPF0519 protein B (sigN122) from Dictyostelium discoideum (Social amoeba).